Reading from the N-terminus, the 575-residue chain is Alpha-humulene synthase (575 aa).

Positions 325, 329, 469, and 477 each coordinate Mg(2+). Positions 325 to 329 match the DDXXD motif motif; it reads DDLYD.

Belongs to the terpene synthase family. Tpsa subfamily. Mg(2+) serves as cofactor. Requires Mn(2+) as cofactor.

It catalyses the reaction (2E,6E)-farnesyl diphosphate = alpha-humulene + diphosphate. It functions in the pathway sesquiterpene biosynthesis. The protein operates within terpene metabolism; oleoresin biosynthesis. Its function is as follows. Terpene synthase (TPS) involved in the biosynthesis of sesquiterpene natural products included in conifer oleoresin secretions and volatile emissions; these compounds contribute to biotic and abiotic stress defense against herbivores and pathogens. Catalyzes the conversion of (2E,6E)-farnesyl diphosphate (FPP) to (1E,4E,8E)-alpha-humulene. This chain is Alpha-humulene synthase, found in Picea glauca (White spruce).